The chain runs to 442 residues: MTRADFIQFGAMIHGVGGTTDGWRHPDVDPSASTNIEFYMKKAQTAEKGLFSFIFIADGLFISEKSIPHFLNRFEPITILSALASVTKNIGLVGTFSTSFTEPFTISRQLMSLDHISGGRAGWNLVTSPQEGAARNHSKSNLPEHTERYEIAQEHLDVVRGLWNSWEHDAFIHNKKTGQFFDQAKLHRLNHKGKYFQVEGPLNIGRSKQGEPVVFQAGSSETGRQFAAKNADAIFTHSNSLEETKAFYADVKSRAADEGRDPSSVRIFPGISPIVADTEEEAEKKYREFAELIPIENAVTYLARFFDDYDLSVYPLDEPFPDIGDVGKNAFQSTTDRIKREAKARNLTLREVAQEMAFPRTLFIGTPERVASLIETWFNAEAADGFIVGSDIPGTLDAFVEKVIPILQERGLYRQDYRGGTLRENLGLGIPQHQSVLHSSHH.

The FMN site is built by Asp-58, Thr-95, His-145, Tyr-149, Ser-219, and Ser-220.

This sequence belongs to the NtaA/SnaA/DszA monooxygenase family. In terms of assembly, homodimer.

The catalysed reaction is (R)-N-acetyl-S-benzyl-L-cysteine sulfoxide + FMNH2 + O2 = N-acetyl-S-hydroxy-L-cysteine + benzaldehyde + FMN + H2O + H(+). Its pathway is amino-acid metabolism. Functionally, involved in a cysteine salvage pathway from S-alkylcysteine. Catalyzes the C-S bond cleavage in N-acetyl-S-benzyl-L-cysteine sulfoxide leading to N-acetyl-S-hydroxy-L-cysteine and benzaldehyde. This pathway is likely important in the catabolism of alkylated cysteine generated by proteolysis of alkylated glutathione formed in the detoxification of a wide range of electrophiles. Has much less efficient activity with N-acetyl-S-methyl-L-cysteine sulfoxide as substrate. Cannot use S-alkylated L-cysteine sulfones and ketone analogs as substrates, demonstrating that the sulfoxide is required for activity. The protein is N-acetyl-S-alkylcysteine sulfoxide monooxygenase of Bacillus subtilis (strain 168).